Here is a 158-residue protein sequence, read N- to C-terminus: Phosphopantetheine adenylyltransferase (158 aa).

Residue serine 10 coordinates substrate. ATP-binding positions include 10 to 11 (SF) and histidine 18. Substrate contacts are provided by lysine 42, leucine 74, and arginine 88. ATP contacts are provided by residues 89-91 (GLR), glutamate 99, and 124-130 (YANISSS).

It belongs to the bacterial CoaD family. As to quaternary structure, homohexamer. Requires Mg(2+) as cofactor.

It localises to the cytoplasm. The catalysed reaction is (R)-4'-phosphopantetheine + ATP + H(+) = 3'-dephospho-CoA + diphosphate. Its pathway is cofactor biosynthesis; coenzyme A biosynthesis; CoA from (R)-pantothenate: step 4/5. Functionally, reversibly transfers an adenylyl group from ATP to 4'-phosphopantetheine, yielding dephospho-CoA (dPCoA) and pyrophosphate. The sequence is that of Phosphopantetheine adenylyltransferase from Vesicomyosocius okutanii subsp. Calyptogena okutanii (strain HA).